We begin with the raw amino-acid sequence, 959 residues long: Transcription factor 1 (959 aa).

C2H2-type zinc fingers lie at residues 2 to 24 (VFCTYCGHSFTRDEHLERHILTH) and 30 to 52 (FKCFTCHMSFARRDLLQGHYTVH). A DNA-binding region (zn(2)-C6 fungal-type) is located at residues 79–105 (CSNCAKTKTKCDKKFPCSRCASRNLRC). A disordered region spans residues 154–226 (PTGHVEESSK…SFPGFDDYNQ (73 aa)). Low complexity predominate over residues 163-178 (KSSSPSGSPTSISHNS).

The protein localises to the nucleus. Elsinochromes biosynthesis cluster-specific transcription factor that positively regulates the expression of cluster genes including RDT1, PKS1, PRF1 and HP1, and subsequent elsinochromes production. In Elsinoe fawcettii (Citrus scab fungus), this protein is Transcription factor 1.